We begin with the raw amino-acid sequence, 486 residues long: Cardiolipin synthase A (486 aa).

Transmembrane regions (helical) follow at residues 3–23 (TVYT…IAGV) and 38–58 (MAWL…YLAV). PLD phosphodiesterase domains lie at 219–246 (MDLR…VDPR) and 399–426 (EGGL…DMRS). Active-site residues include histidine 224, lysine 226, aspartate 231, histidine 404, lysine 406, and aspartate 411.

The protein belongs to the phospholipase D family. Cardiolipin synthase subfamily. ClsA sub-subfamily.

It is found in the cell inner membrane. The catalysed reaction is 2 a 1,2-diacyl-sn-glycero-3-phospho-(1'-sn-glycerol) = a cardiolipin + glycerol. Catalyzes the reversible phosphatidyl group transfer from one phosphatidylglycerol molecule to another to form cardiolipin (CL) (diphosphatidylglycerol) and glycerol. The sequence is that of Cardiolipin synthase A from Shigella boydii serotype 4 (strain Sb227).